The primary structure comprises 250 residues: MADS-box transcription factor 47 (250 aa).

Gly residues predominate over residues methionine 1–arginine 10. Disordered regions lie at residues methionine 1–glycine 20 and serine 196–lysine 250. Residues glycine 11–glycine 20 show a composition bias toward basic and acidic residues. An MADS-box domain is found at glycine 20–serine 80. The K-box domain maps to glutamine 106 to methionine 198. Polar residues predominate over residues glycine 214 to serine 224.

As to quaternary structure, may interact with MADS18. As to expression, expressed in roots, shoots and developing panicles. Expressed in mature stems and leaves, flowering panicles, developing seeds, and mature seeds.

The protein resides in the nucleus. Functionally, transcription factor that modulates expressions of multiple genes involved in cell signaling and gene transcription. Plays a negative regulatory role in brassinosteroid signaling. This Oryza sativa subsp. japonica (Rice) protein is MADS-box transcription factor 47.